A 234-amino-acid chain; its full sequence is MIFIPPFEQGKLLRRYKRFLADVLLDDGTEITIHCPNTGSMRNCLFPGERVWFSTSDNPKRKYAHTWEQAASDEGHIIGINTGRANALAAEAIEAGVISELTGYDRLRREVKYGSENSRIDLLLESEDKPACYIEVKSCTLLEQGQGYFPDAVTTRGQKHLRELMEMVKQGHRAVLLFVVQHTGITTVAAARHIDPEYAELLTQAHQAGVEILAYSCELSPSAAKLIKSCPVKL.

The protein belongs to the SfsA family.

This is Sugar fermentation stimulation protein homolog from Shewanella loihica (strain ATCC BAA-1088 / PV-4).